We begin with the raw amino-acid sequence, 341 residues long: Undecaprenyl-phosphate 4-deoxy-4-formamido-L-arabinose transferase (341 aa).

2 consecutive transmembrane segments (helical) span residues 235-255 and 269-289; these read LSIVGFSLAALGMLFAFALIV and LFVLFAVLFVFTGGQFIGMGL.

Belongs to the glycosyltransferase 2 family.

The protein resides in the cell inner membrane. The enzyme catalyses UDP-4-deoxy-4-formamido-beta-L-arabinose + di-trans,octa-cis-undecaprenyl phosphate = 4-deoxy-4-formamido-alpha-L-arabinopyranosyl di-trans,octa-cis-undecaprenyl phosphate + UDP. It functions in the pathway glycolipid biosynthesis; 4-amino-4-deoxy-alpha-L-arabinose undecaprenyl phosphate biosynthesis; 4-amino-4-deoxy-alpha-L-arabinose undecaprenyl phosphate from UDP-4-deoxy-4-formamido-beta-L-arabinose and undecaprenyl phosphate: step 1/2. It participates in bacterial outer membrane biogenesis; lipopolysaccharide biosynthesis. Catalyzes the transfer of 4-deoxy-4-formamido-L-arabinose from UDP to undecaprenyl phosphate. The modified arabinose is attached to lipid A and is required for resistance to polymyxin and cationic antimicrobial peptides. The chain is Undecaprenyl-phosphate 4-deoxy-4-formamido-L-arabinose transferase from Pseudomonas fluorescens (strain SBW25).